The primary structure comprises 616 residues: MPKYRSATTTHGRNMAGARALWRATGMTDDDFGKPIIAVVNSFTQFVPGHVHLRDLGKLVAEQIEASGGVAKEFNTIAVDDGIAMGHGGMLYSLPSRELIADSVEYMVNAHCADAMVCISNCDKITPGMLMASLRLNIPVIFVSGGPMEAGKTKLSNQIIKLDLIDAMIQGANPNVSDADSEQIERSACPTCGSCSGMFTANSMNCLTEALGLSQPANGSLLATHADRRDLFLNAGTRIVGLAKRYYEQDDASVLPRNIANKAAFENAMILDIAMGGSTNTVLHLLAAAQEGEIDFTMSDIDRLSRKVPHLCKVAPSGQKYHMEDVHRAGGVIGILGELDRAGLLNREVNNVLGKTLPETLEAYDVMLTKDESVKRMYSAGPAGIRTTKAFSQDCRWDSLDTDRQEGCIRSREYAYSQDGGLAVLYGNIAVDGCIVKTAGVDKESLIFRGPAKVYESQDDAVEAILGGKVVAGDVVVIRYEGPKGGPGMQEMLYPTTYLKSMGLGKSCALITDGRFSGGTSGLSIGHASPEAASGGIIGLVQDGDMIAIDIPSRSIVLDVAENELASRRETELARGDAAWTPHNRERQVSFALRAYAILATSADKGAVRDKSKLGG.

Asp81 contacts Mg(2+). Cys122 serves as a coordination point for [2Fe-2S] cluster. The Mg(2+) site is built by Asp123 and Lys124. At Lys124 the chain carries N6-carboxylysine. Cys195 is a binding site for [2Fe-2S] cluster. Glu491 lines the Mg(2+) pocket. Ser517 functions as the Proton acceptor in the catalytic mechanism.

It belongs to the IlvD/Edd family. Homodimer. [2Fe-2S] cluster serves as cofactor. It depends on Mg(2+) as a cofactor.

The enzyme catalyses (2R)-2,3-dihydroxy-3-methylbutanoate = 3-methyl-2-oxobutanoate + H2O. The catalysed reaction is (2R,3R)-2,3-dihydroxy-3-methylpentanoate = (S)-3-methyl-2-oxopentanoate + H2O. It participates in amino-acid biosynthesis; L-isoleucine biosynthesis; L-isoleucine from 2-oxobutanoate: step 3/4. Its pathway is amino-acid biosynthesis; L-valine biosynthesis; L-valine from pyruvate: step 3/4. Functionally, functions in the biosynthesis of branched-chain amino acids. Catalyzes the dehydration of (2R,3R)-2,3-dihydroxy-3-methylpentanoate (2,3-dihydroxy-3-methylvalerate) into 2-oxo-3-methylpentanoate (2-oxo-3-methylvalerate) and of (2R)-2,3-dihydroxy-3-methylbutanoate (2,3-dihydroxyisovalerate) into 2-oxo-3-methylbutanoate (2-oxoisovalerate), the penultimate precursor to L-isoleucine and L-valine, respectively. The protein is Dihydroxy-acid dehydratase of Pectobacterium atrosepticum (strain SCRI 1043 / ATCC BAA-672) (Erwinia carotovora subsp. atroseptica).